We begin with the raw amino-acid sequence, 438 residues long: Thymidine phosphorylase (438 aa).

The protein belongs to the thymidine/pyrimidine-nucleoside phosphorylase family. In terms of assembly, homodimer.

The enzyme catalyses thymidine + phosphate = 2-deoxy-alpha-D-ribose 1-phosphate + thymine. It functions in the pathway pyrimidine metabolism; dTMP biosynthesis via salvage pathway; dTMP from thymine: step 1/2. In terms of biological role, the enzymes which catalyze the reversible phosphorolysis of pyrimidine nucleosides are involved in the degradation of these compounds and in their utilization as carbon and energy sources, or in the rescue of pyrimidine bases for nucleotide synthesis. This is Thymidine phosphorylase from Burkholderia cenocepacia (strain ATCC BAA-245 / DSM 16553 / LMG 16656 / NCTC 13227 / J2315 / CF5610) (Burkholderia cepacia (strain J2315)).